A 961-amino-acid polypeptide reads, in one-letter code: Transcription factor MYB3R-4 (961 aa).

A disordered region spans residues 1 to 33 (MEAESSTPQERIPKLRHGRTSGPARRSTRGQWT). 3 consecutive HTH myb-type domains span residues 24–75 (ARRS…QKVL), 76–131 (NPEL…NPAI), and 132–182 (NKEA…KKKL). 3 consecutive DNA-binding regions (H-T-H motif) follow at residues 52–75 (WKKIAEYFKDRTDVQCLHRWQKVL), 104–127 (WSTIARFLPGRIGKQCRERWHNHL), and 155–178 (WAELTKFLPGRSDNGIKNHWHSSV). Disordered regions lie at residues 390-457 (GHSV…LIIS) and 534-555 (RPHSLPKHEPNMTNEQHHEDMG). 2 stretches are compositionally biased toward polar residues: residues 391 to 405 (HSVSRSLTQEPNEFN) and 416 to 430 (SSASDRQISEATKSP). Over residues 431–444 (TQSSSSRFTATAAS) the composition is skewed to low complexity. Residues 534-554 (RPHSLPKHEPNMTNEQHHEDM) show a composition bias toward basic and acidic residues. The Nuclear localization signal motif lies at 612 to 619 (GKKTLVGA). The segment at 756-781 (NTGKPVLSTPGQSVTKAEKAQVSTPR) is disordered. Over residues 764–781 (TPGQSVTKAEKAQVSTPR) the composition is skewed to polar residues.

As to quaternary structure, component of a DREAM-like complex which modulates a variety of developmentally regulated genes and of the mitotic genes in proliferating and differentiated cells. Associates with CDKA-1, RBR1 and E2FB, but not with E2FC, in proliferating cells, at early stages of leaves development. As to expression, expressed in roots, cotyledons and leaves, especially in vascular tissues, and in flowers.

It is found in the nucleus. Transcription factor that binds 5'-AACGG-3' motifs in gene promoters. Involved in the regulation of cytokinesis, probably via the activation of several G2/M phase-specific genes transcription (e.g. KNOLLE). Required for the maintenance of diploidy. In terms of biological role, involved in transcription regulation during induced endoreduplication at the powdery mildew (e.g. G.orontii) infection site, thus promoting G.orontii growth and reproduction. This is Transcription factor MYB3R-4 from Arabidopsis thaliana (Mouse-ear cress).